The following is a 74-amino-acid chain: Progonadoliberin-3 (74 aa).

An N-terminal signal peptide occupies residues 1–15 (VQVVVLALVAQVTLS). At Q16 the chain carries Pyrrolidone carboxylic acid. Residue G25 is modified to Glycine amide.

It belongs to the GnRH family.

The protein localises to the secreted. Its function is as follows. Stimulates the secretion of gonadotropins. The sequence is that of Progonadoliberin-3 (gnrh3) from Oncorhynchus mykiss (Rainbow trout).